The primary structure comprises 83 residues: Male-specific opa-containing protein (83 aa).

The signal sequence occupies residues 1-18 (MNFIQIAVLFVLVAVALA). A disordered region spans residues 23 to 83 (DPANLPAPEA…NVNHNVITIG (61 aa)). The span at 28–49 (PAPEAAAAPPAAAAAPPAAAAA) shows a compositional bias: low complexity. A compositionally biased stretch (pro residues) spans 50-59 (PPAPPAPPAA).

In terms of tissue distribution, adult male abdomen.

In terms of biological role, may be a male specific regulatory factor. The sequence is that of Male-specific opa-containing protein (msopa) from Drosophila melanogaster (Fruit fly).